The primary structure comprises 206 residues: ATP phosphoribosyltransferase (206 aa).

It belongs to the ATP phosphoribosyltransferase family. Short subfamily. As to quaternary structure, heteromultimer composed of HisG and HisZ subunits.

It localises to the cytoplasm. It carries out the reaction 1-(5-phospho-beta-D-ribosyl)-ATP + diphosphate = 5-phospho-alpha-D-ribose 1-diphosphate + ATP. The protein operates within amino-acid biosynthesis; L-histidine biosynthesis; L-histidine from 5-phospho-alpha-D-ribose 1-diphosphate: step 1/9. Its function is as follows. Catalyzes the condensation of ATP and 5-phosphoribose 1-diphosphate to form N'-(5'-phosphoribosyl)-ATP (PR-ATP). Has a crucial role in the pathway because the rate of histidine biosynthesis seems to be controlled primarily by regulation of HisG enzymatic activity. This Wolinella succinogenes (strain ATCC 29543 / DSM 1740 / CCUG 13145 / JCM 31913 / LMG 7466 / NCTC 11488 / FDC 602W) (Vibrio succinogenes) protein is ATP phosphoribosyltransferase.